The primary structure comprises 216 residues: Uracil-DNA glycosylase (216 aa).

The Proton acceptor role is filled by Asp59.

It belongs to the uracil-DNA glycosylase (UDG) superfamily. UNG family.

It localises to the cytoplasm. It catalyses the reaction Hydrolyzes single-stranded DNA or mismatched double-stranded DNA and polynucleotides, releasing free uracil.. Excises uracil residues from the DNA which can arise as a result of misincorporation of dUMP residues by DNA polymerase or due to deamination of cytosine. This is Uracil-DNA glycosylase from Staphylococcus epidermidis (strain ATCC 12228 / FDA PCI 1200).